The chain runs to 247 residues: ATP synthase delta chain, chloroplastic (247 aa).

The transit peptide at 1–60 (MAALRLASFTLRPAAAAAASASSGATPAAPRSASFARAARGLPSLRLAPPRRRGDLVRPR) directs the protein to the chloroplast.

Belongs to the ATPase delta chain family. As to quaternary structure, F-type ATPases have 2 components, CF(1) - the catalytic core - and CF(0) - the membrane proton channel. CF(1) has five subunits: alpha(3), beta(3), gamma(1), delta(1), epsilon(1). CF(0) has three main subunits: a, b and c.

The protein localises to the plastid. It is found in the chloroplast thylakoid membrane. In terms of biological role, this protein seems to be part of the stalk that links CF(0) to CF(1). It either transmits conformational changes from CF(0) into CF(1) or is implicated in proton conduction. This chain is ATP synthase delta chain, chloroplastic (ATPD), found in Sorghum bicolor (Sorghum).